Consider the following 100-residue polypeptide: Ubiquitin-related modifier 1 homolog (100 aa).

A 1-thioglycine modification is found at G100. Residue G100 forms a Glycyl lysine isopeptide (Gly-Lys) (interchain with K-? in acceptor proteins) linkage.

This sequence belongs to the URM1 family. As to quaternary structure, interacts with cer. In terms of processing, C-terminal thiocarboxylation occurs in 2 steps, it is first acyl-adenylated (-COAMP) via the hesA/moeB/thiF part of the MOCS3 homolog, then thiocarboxylated (-COSH) via the rhodanese domain of the MOCS3 homolog.

Its subcellular location is the cytoplasm. The protein operates within tRNA modification; 5-methoxycarbonylmethyl-2-thiouridine-tRNA biosynthesis. Functionally, acts as a sulfur carrier required for 2-thiolation of mcm(5)S(2)U at tRNA wobble positions of cytosolic tRNA(Lys), tRNA(Glu) and tRNA(Gln). Serves as sulfur donor in tRNA 2-thiolation reaction by being thiocarboxylated (-COSH) at its C-terminus by MOCS3. The sulfur is then transferred to tRNA to form 2-thiolation of mcm(5)S(2)U. Also acts as a ubiquitin-like protein (UBL) that is covalently conjugated via an isopeptide bond to lysine residues of target proteins such as Prx2/Jafrac1, Ciao1, Eip71CD and GILT1. The thiocarboxylated form serves as substrate for conjugation and oxidative stress specifically induces the formation of UBL-protein conjugates. The protein is Ubiquitin-related modifier 1 homolog of Drosophila willistoni (Fruit fly).